The following is a 120-amino-acid chain: U13-lycotoxin-Ls1f (120 aa).

Residues 1–19 (MKILFVLISILYAVYRFSS) form the signal peptide. The propeptide occupies 20–54 (EEDVDSAYLANELEPVEDINSEQYAALEPKEEQER). Intrachain disulfides connect cysteine 56–cysteine 70, cysteine 63–cysteine 76, cysteine 69–cysteine 87, and cysteine 78–cysteine 85. An Agouti domain is found at 56–95 (CAGMGQDCKDDCDCCLNIATCNCWFGRYFCSCTFGDYQTC).

Belongs to the neurotoxin 05 (agouti) family. Post-translationally, contains 6 disulfide bonds. In terms of tissue distribution, expressed by the venom gland.

It localises to the secreted. In Lycosa singoriensis (Wolf spider), this protein is U13-lycotoxin-Ls1f.